A 132-amino-acid polypeptide reads, in one-letter code: Small ribosomal subunit protein uS8 (132 aa).

This sequence belongs to the universal ribosomal protein uS8 family. Part of the 30S ribosomal subunit. Contacts proteins S5 and S12.

Functionally, one of the primary rRNA binding proteins, it binds directly to 16S rRNA central domain where it helps coordinate assembly of the platform of the 30S subunit. The protein is Small ribosomal subunit protein uS8 of Listeria innocua serovar 6a (strain ATCC BAA-680 / CLIP 11262).